The primary structure comprises 283 residues: Protoheme IX farnesyltransferase (283 aa).

9 consecutive transmembrane segments (helical) span residues 6 to 26 (LLLT…AGFL), 35 to 55 (FGLF…GCVF), 85 to 105 (AIVF…FYTN), 106 to 126 (LLTL…YSIW), 131 to 151 (VYGT…GYCA), 160 to 180 (AFIL…SIAI), 207 to 227 (ILLY…FHFT), 230 to 250 (LYLI…LRGL), and 262 to 282 (MFRF…FDLV).

The protein belongs to the UbiA prenyltransferase family. Protoheme IX farnesyltransferase subfamily.

The protein localises to the cell inner membrane. It carries out the reaction heme b + (2E,6E)-farnesyl diphosphate + H2O = Fe(II)-heme o + diphosphate. Its pathway is porphyrin-containing compound metabolism; heme O biosynthesis; heme O from protoheme: step 1/1. Its function is as follows. Converts heme B (protoheme IX) to heme O by substitution of the vinyl group on carbon 2 of heme B porphyrin ring with a hydroxyethyl farnesyl side group. The polypeptide is Protoheme IX farnesyltransferase (Protochlamydia amoebophila (strain UWE25)).